The sequence spans 434 residues: Nicotinate phosphoribosyltransferase (434 aa).

H242 is modified (phosphohistidine; by autocatalysis).

It belongs to the NAPRTase family. Transiently phosphorylated on a His residue during the reaction cycle. Phosphorylation strongly increases the affinity for substrates and increases the rate of nicotinate D-ribonucleotide production. Dephosphorylation regenerates the low-affinity form of the enzyme, leading to product release.

The enzyme catalyses nicotinate + 5-phospho-alpha-D-ribose 1-diphosphate + ATP + H2O = nicotinate beta-D-ribonucleotide + ADP + phosphate + diphosphate. Its pathway is cofactor biosynthesis; NAD(+) biosynthesis; nicotinate D-ribonucleotide from nicotinate: step 1/1. In terms of biological role, catalyzes the synthesis of beta-nicotinate D-ribonucleotide from nicotinate and 5-phospho-D-ribose 1-phosphate at the expense of ATP. The polypeptide is Nicotinate phosphoribosyltransferase (Sinorhizobium medicae (strain WSM419) (Ensifer medicae)).